The chain runs to 329 residues: Glycerol-3-phosphate dehydrogenase [NAD(P)+] (329 aa).

NADPH contacts are provided by W11, R30, and K103. The sn-glycerol 3-phosphate site is built by K103, G132, and S134. Position 136 (A136) interacts with NADPH. Sn-glycerol 3-phosphate is bound by residues K187, D240, S250, R251, and N252. The active-site Proton acceptor is the K187. Residue R251 participates in NADPH binding. The NADPH site is built by V275 and E277.

Belongs to the NAD-dependent glycerol-3-phosphate dehydrogenase family.

It localises to the cytoplasm. The catalysed reaction is sn-glycerol 3-phosphate + NAD(+) = dihydroxyacetone phosphate + NADH + H(+). The enzyme catalyses sn-glycerol 3-phosphate + NADP(+) = dihydroxyacetone phosphate + NADPH + H(+). It functions in the pathway membrane lipid metabolism; glycerophospholipid metabolism. Its function is as follows. Catalyzes the reduction of the glycolytic intermediate dihydroxyacetone phosphate (DHAP) to sn-glycerol 3-phosphate (G3P), the key precursor for phospholipid synthesis. The chain is Glycerol-3-phosphate dehydrogenase [NAD(P)+] from Nitrosomonas europaea (strain ATCC 19718 / CIP 103999 / KCTC 2705 / NBRC 14298).